Consider the following 294-residue polypeptide: Foldase protein PrsA 1 (294 aa).

Residues 1–21 (MTKLKKVMISVIAATLLLLAG) form the signal peptide. Cys-22 carries the N-palmitoyl cysteine lipid modification. A lipid anchor (S-diacylglycerol cysteine) is attached at Cys-22. A PpiC domain is found at 135–226 (EPDITVRHIL…YGYHLIQLVK (92 aa)).

It belongs to the PrsA family.

The protein resides in the cell membrane. It carries out the reaction [protein]-peptidylproline (omega=180) = [protein]-peptidylproline (omega=0). Its function is as follows. Plays a major role in protein secretion by helping the post-translocational extracellular folding of several secreted proteins. This is Foldase protein PrsA 1 (prsA1) from Listeria monocytogenes serovar 1/2a (strain ATCC BAA-679 / EGD-e).